Here is a 247-residue protein sequence, read N- to C-terminus: 2,3-bisphosphoglycerate-dependent phosphoglycerate mutase (247 aa).

Substrate-binding positions include 8 to 15, 21 to 22, R60, 87 to 90, K98, 114 to 115, and 183 to 184; these read RHGESTWN, TG, ERHY, RR, and GN. H9 (tele-phosphohistidine intermediate) is an active-site residue. E87 serves as the catalytic Proton donor/acceptor.

It belongs to the phosphoglycerate mutase family. BPG-dependent PGAM subfamily. In terms of assembly, homodimer.

It carries out the reaction (2R)-2-phosphoglycerate = (2R)-3-phosphoglycerate. It participates in carbohydrate degradation; glycolysis; pyruvate from D-glyceraldehyde 3-phosphate: step 3/5. Catalyzes the interconversion of 2-phosphoglycerate and 3-phosphoglycerate. The protein is 2,3-bisphosphoglycerate-dependent phosphoglycerate mutase of Acidovorax sp. (strain JS42).